The sequence spans 549 residues: MKQDLYKESSPPPSTTKSKGLYVIVAALVTTAIYLLYSQGYSNTHGEKDMPSVVPNLVLPANPSSDHSFAVKHIYHHNTEADANHGRMDVSGEWVRAAQKAQHLNLGQDTHRYMASNARDPYTNLPLKSRTQKVKRWRQRDPDHVESYLEAARLNPQLYGAMDFDWVEEDILVPDVTDRDTVVSLAVMASNAYVDVPFTGDWTNVSWKETGGIGWQSDGVRGHIFVDQTPGSPLVVIALKGTSAAIFDSGGDTVINDKTNDNLLFSCCCARVSYLWNTVCDCYTGESYTCDQECLEKELYAEDRYYRAVLDIYRNVTHLYPQKQIWVTGHSLGGALSAMLGRTYGIPAVGYEAPGELLPTKRLHLPSPPGIPWSQEHIWHFGHTADPIFMGVCNGASSSCSIGGYAMETSCHSGLQCMYDVVTDKGWHLSMVNHRIHTVIDEVLLAYNETAACVPPPPCQDCFNWNFVMGNDKDDDDKDKKKKKKTSTSSSVVSKTKTSTSSTVATNTMPSLPDPTCVERNWYGKCIRYDPEIKQQYGDSHTVTHVTMA.

The Cytoplasmic portion of the chain corresponds to 1–19 (MKQDLYKESSPPPSTTKSK). The helical; Signal-anchor for type II membrane protein transmembrane segment at 20 to 42 (GLYVIVAALVTTAIYLLYSQGYS) threads the bilayer. At 43–549 (NTHGEKDMPS…SHTVTHVTMA (507 aa)) the chain is on the lumenal side. Residues Asn204 and Asn315 are each glycosylated (N-linked (GlcNAc...) asparagine). The active-site Charge relay system is Ser331. Asn448 carries N-linked (GlcNAc...) asparagine glycosylation. The tract at residues 474-510 (DDDDKDKKKKKKTSTSSSVVSKTKTSTSSTVATNTMP) is disordered. The span at 487-504 (STSSSVVSKTKTSTSSTV) shows a compositional bias: low complexity.

Belongs to the AB hydrolase superfamily. Lipase family. Binds to both phosphatidylinositol (PI) and phosphatidylinositol 3,5-bisphosphate (PIP2).

The protein resides in the endosome. It localises to the multivesicular body membrane. Its subcellular location is the prevacuolar compartment membrane. The catalysed reaction is a triacylglycerol + H2O = a diacylglycerol + a fatty acid + H(+). Its function is as follows. Lipase which is essential for lysis of subvacuolar cytoplasm to vacuole targeted bodies and intravacuolar autophagic bodies. Involved in the lysis of intravacuolar multivesicular body (MVB) vesicles. The intravacuolar membrane disintegration by ATG15 is critical to life span extension. The sequence is that of Putative lipase ATG15 (ATG15) from Yarrowia lipolytica (strain CLIB 122 / E 150) (Yeast).